The following is a 285-amino-acid chain: Urease accessory protein UreD 1 (285 aa).

It belongs to the UreD family. As to quaternary structure, ureD, UreF and UreG form a complex that acts as a GTP-hydrolysis-dependent molecular chaperone, activating the urease apoprotein by helping to assemble the nickel containing metallocenter of UreC. The UreE protein probably delivers the nickel.

It localises to the cytoplasm. Required for maturation of urease via the functional incorporation of the urease nickel metallocenter. The sequence is that of Urease accessory protein UreD 1 from Pseudomonas syringae pv. tomato (strain ATCC BAA-871 / DC3000).